The chain runs to 256 residues: MEGKPRVKVVLLDIEGTVCPISFVKDILFPYALAALPETLSTQWDSPSFLPYRSAFPPEHASTPDALLSHVRDLMAQDLKIPYLKSLQGYLWLRGYESGELKCPLFPDVYPALKKWRDNGAKICIYSSGSVAAQKLLWRYTTEGDLRSCIWNGLEGDDGRELEGGYWDTVNAGLKQHMASYEKIAKANSALGEVGEWLFLSDNIKEVRAAREAGMKSFVVVREGNAEVTAEEREGQVLVESFAEVEKWVEVTADKA.

Asp-13 and Glu-15 together coordinate Mg(2+). Substrate is bound by residues 127 to 128 (SS) and Lys-175. Position 202 (Asp-202) interacts with Mg(2+).

It belongs to the HAD-like hydrolase superfamily. MasA/MtnC family. In terms of assembly, monomer. Requires Mg(2+) as cofactor.

It localises to the cytoplasm. It is found in the nucleus. The enzyme catalyses 5-methylsulfanyl-2,3-dioxopentyl phosphate + H2O = 1,2-dihydroxy-5-(methylsulfanyl)pent-1-en-3-one + phosphate. It participates in amino-acid biosynthesis; L-methionine biosynthesis via salvage pathway; L-methionine from S-methyl-5-thio-alpha-D-ribose 1-phosphate: step 3/6. The protein operates within amino-acid biosynthesis; L-methionine biosynthesis via salvage pathway; L-methionine from S-methyl-5-thio-alpha-D-ribose 1-phosphate: step 4/6. In terms of biological role, bifunctional enzyme that catalyzes the enolization of 2,3-diketo-5-methylthiopentyl-1-phosphate (DK-MTP-1-P) into the intermediate 2-hydroxy-3-keto-5-methylthiopentenyl-1-phosphate (HK-MTPenyl-1-P), which is then dephosphorylated to form the acireductone 1,2-dihydroxy-3-keto-5-methylthiopentene (DHK-MTPene). In Botryotinia fuckeliana (strain B05.10) (Noble rot fungus), this protein is Enolase-phosphatase E1 (utr4).